The chain runs to 620 residues: uncharacterized protein (620 aa).

Transmembrane regions (helical) follow at residues 66 to 86, 238 to 258, 546 to 566, and 584 to 604; these read LLNF…NQII, FFDA…NLLW, LGII…VWTI, and IIFI…ILVF.

It localises to the cell membrane. This is an uncharacterized protein from Mycoplasma genitalium (strain ATCC 33530 / DSM 19775 / NCTC 10195 / G37) (Mycoplasmoides genitalium).